We begin with the raw amino-acid sequence, 178 residues long: ATP-dependent protease subunit HslV (178 aa).

Thr5 is an active-site residue. 3 residues coordinate Na(+): Gly161, Cys164, and Thr167.

Belongs to the peptidase T1B family. HslV subfamily. A double ring-shaped homohexamer of HslV is capped on each side by a ring-shaped HslU homohexamer. The assembly of the HslU/HslV complex is dependent on binding of ATP.

It is found in the cytoplasm. The enzyme catalyses ATP-dependent cleavage of peptide bonds with broad specificity.. Allosterically activated by HslU binding. Protease subunit of a proteasome-like degradation complex believed to be a general protein degrading machinery. The chain is ATP-dependent protease subunit HslV from Nitratiruptor sp. (strain SB155-2).